We begin with the raw amino-acid sequence, 52 residues long: Conotoxin-like peptide 2 (52 aa).

The first 18 residues, 1 to 18 (MKFSTILLLVCPTVALSA), serve as a signal peptide directing secretion. Cystine bridges form between Cys-24–Cys-38, Cys-31–Cys-42, and Cys-37–Cys-49.

Its subcellular location is the secreted. The protein is Conotoxin-like peptide 2 (CTL-2) of Orgyia pseudotsugata (Douglas-fir tussock moth).